The chain runs to 274 residues: Dermonecrotic toxin SdSicTox-betaIIB1ai (274 aa).

His5 is an active-site residue. Mg(2+)-binding residues include Glu25 and Asp27. The active-site Nucleophile is the His41. Cystine bridges form between Cys45/Cys51 and Cys47/Cys190. Position 85 (Asp85) interacts with Mg(2+).

The protein belongs to the arthropod phospholipase D family. Class II subfamily. It depends on Mg(2+) as a cofactor. In terms of tissue distribution, expressed by the venom gland.

It is found in the secreted. It catalyses the reaction an N-(acyl)-sphingosylphosphocholine = an N-(acyl)-sphingosyl-1,3-cyclic phosphate + choline. It carries out the reaction an N-(acyl)-sphingosylphosphoethanolamine = an N-(acyl)-sphingosyl-1,3-cyclic phosphate + ethanolamine. The catalysed reaction is a 1-acyl-sn-glycero-3-phosphocholine = a 1-acyl-sn-glycero-2,3-cyclic phosphate + choline. The enzyme catalyses a 1-acyl-sn-glycero-3-phosphoethanolamine = a 1-acyl-sn-glycero-2,3-cyclic phosphate + ethanolamine. Dermonecrotic toxins cleave the phosphodiester linkage between the phosphate and headgroup of certain phospholipids (sphingolipid and lysolipid substrates), forming an alcohol (often choline) and a cyclic phosphate. This toxin acts on sphingomyelin (SM). It may also act on ceramide phosphoethanolamine (CPE), lysophosphatidylcholine (LPC) and lysophosphatidylethanolamine (LPE), but not on lysophosphatidylserine (LPS), and lysophosphatidylglycerol (LPG). It acts by transphosphatidylation, releasing exclusively cyclic phosphate products as second products. Induces dermonecrosis, hemolysis, increased vascular permeability, edema, inflammatory response, and platelet aggregation. The sequence is that of Dermonecrotic toxin SdSicTox-betaIIB1ai from Sicarius cf. damarensis (strain GJB-2008) (Six-eyed sand spider).